Reading from the N-terminus, the 425-residue chain is Putative TRAP transporter large permease protein HI_1029 (425 aa).

13 helical membrane passes run 3–23 (VIIFLSVLLGTIILGVPVAFA), 24–44 (LLICGIALMLHLDFFNAQILA), 54–74 (FSLMAIPFFILAGEIMNEGGL), 93–113 (LGFVAILSAMIMASLSGSAVA), 139–159 (LIGTAGIIAPIIPPSIPFIVF), 169–189 (KLFLAGIFPGVIMGCCLAILW), 217–237 (VWALMLPVIIIGGFRSGIFTP), 241–261 (GVVATFYALIVSLFIYHELPL), 275–295 (TAVVMFLVASANVTGYLITVA), 312–332 (PTILLLVIMLAVFVIGMVMDL), 334–354 (PTVLILTPVLMPLVEEAGIDP), 355–375 (VYFGVLFILNTSIGLITPPVG), and 399–419 (YLGMMIMLLLTFIFIPELILM).

The protein belongs to the TRAP transporter large permease family.

It localises to the cell inner membrane. The protein is Putative TRAP transporter large permease protein HI_1029 of Haemophilus influenzae (strain ATCC 51907 / DSM 11121 / KW20 / Rd).